The following is a 512-amino-acid chain: MWRVRKRGYFGIWSFPLIIAAVCAQSVNDPSNMSLVKETVDRLLKGYDIRLRPDFGGPPVAVGMNIDIASIDMVSEVNMDYTLTMYFQQAWRDKRLSYNVIPLNLTLDNRVADQLWVPDTYFLNDKKSFVHGVTVKNRMIRLHPDGTVLYGLRITTTAACMMDLRRYPLDEQNCTLEIESYGYTTDDIEFYWRGDDNAVTGVTKIELPQFSIVDYKLITKKVVFSTGSYPRLSLSFKLKRNIGYFILQTYMPSILITILSWVSFWINYDASAARVALGITTVLTMTTINTHLRETLPKIPYVKAIDMYLMGCFVFVFMALLEYALVNYIFFGRGPQRQKKAAEKAANANNEKMRLDVNKMFYKDIKQNGTQYRSLWDPTGDLSPTRRTTNYDFSLYTMDPHENILLSTLEIKNEMATSEAVMGLGDPRSTMLAYDASSIQYRKAGLPRHSFGRNALERHVAQKKSRLRRRASQLKITIPDLTDVNAIDRWSRIFFPVVFSFFNIVYWLYYVN.

The signal sequence occupies residues 1–25 (MWRVRKRGYFGIWSFPLIIAAVCAQ). Over 26–244 (SVNDPSNMSL…SFKLKRNIGY (219 aa)) the chain is Extracellular. Asparagine 32 and asparagine 104 each carry an N-linked (GlcNAc...) asparagine glycan. Tyrosine 121 contributes to the histamine binding site. Cysteine 160 and cysteine 174 are joined by a disulfide. N-linked (GlcNAc...) asparagine glycosylation occurs at asparagine 173. Histamine contacts are provided by residues 180–181 (SY) and threonine 226. 4-aminobutanoate-binding residues include tyrosine 181 and threonine 226. 3 consecutive transmembrane segments (helical) span residues 245–266 (FILQ…SFWI), 270–292 (ASAA…NTHL), and 304–326 (AIDM…YALV). At 327 to 489 (NYIFFGRGPQ…DLTDVNAIDR (163 aa)) the chain is on the cytoplasmic side. At tyrosine 441 the chain carries Phosphotyrosine. A helical transmembrane segment spans residues 490–511 (WSRIFFPVVFSFFNIVYWLYYV).

The protein belongs to the ligand-gated ion channel (TC 1.A.9) family. Gamma-aminobutyric acid receptor (TC 1.A.9.5) subfamily. GABRB2 sub-subfamily. In terms of assembly, heteropentamer, formed by a combination of alpha (GABRA1-6), beta (GABRB1-3), gamma (GABRG1-3), delta (GABRD), epsilon (GABRE), rho (GABRR1-3), pi (GABRP) and theta (GABRQ) chains, each subunit exhibiting distinct physiological and pharmacological properties. Interacts with UBQLN1. May interact with KIF21B. Identified in a complex of 720 kDa composed of LHFPL4, NLGN2, GABRA1, GABRB2, GABRG2 and GABRB3. In terms of processing, glycosylated.

The protein localises to the postsynaptic cell membrane. Its subcellular location is the cell membrane. It is found in the cytoplasmic vesicle. It catalyses the reaction chloride(in) = chloride(out). With respect to regulation, allosterically activated by benzodiazepines and the anesthetic etomidate. Inhibited by the antagonist bicuculline. Potentiated by histamine. In terms of biological role, beta subunit of the heteropentameric ligand-gated chloride channel gated by gamma-aminobutyric acid (GABA), a major inhibitory neurotransmitter in the brain. GABA-gated chloride channels, also named GABA(A) receptors (GABAAR), consist of five subunits arranged around a central pore and contain GABA active binding site(s) located at the alpha and beta subunit interface(s). When activated by GABA, GABAARs selectively allow the flow of chloride anions across the cell membrane down their electrochemical gradient. Chloride influx into the postsynaptic neuron following GABAAR opening decreases the neuron ability to generate a new action potential, thereby reducing nerve transmission. GABAARs containing alpha-1 and beta-2 or -3 subunits exhibit synaptogenic activity; the gamma-2 subunit being necessary but not sufficient to induce rapid synaptic contacts formation. Extrasynaptic beta-2 receptors contribute to the tonic GABAergic inhibition. Beta-containing GABAARs can simultaneously bind GABA and histamine where histamine binds at the interface of two neighboring beta subunits, which may be involved in the regulation of sleep and wakefulness. This chain is Gamma-aminobutyric acid receptor subunit beta-2, found in Mus musculus (Mouse).